Here is a 624-residue protein sequence, read N- to C-terminus: MAAPRWAVWAVLLLRLLVPAARVLANMEGDALHSLRTNLVDPNNVLQSWDPTLVNPCTWFHVTCNNDNSVIRVDLGNAALSGTLVPQLGQLKNLQYLELYSNNISGTIPSELGNLTNLVSLDLYLNNFTGPIPDSLGNLLKLRFLRLNNNSLSGSIPKSLTAITALQVLDLSNNNLSGEVPSTGSFSLFTPISFANNPSLCGPGTTKPCPGAPPFSPPPPYNPPTPVQSPGSSSSTGAIAGGVAAGAALLFAIPAIGFAWYRRRKPQEHFFDVPAEEDPEVHLGQLKRFSLRELQVATDTFSNKNILGRGGFGKVYKGRLADGSLVAVKRLKEERTPGGELQFQTEVEMISMAVHRNLLRLRGFCMTPTERLLVYPYMANGSVASRLRERPPSEPPLDWRTRRRIALGSARGLSYLHDHCDPKIIHRDVKAANILLDEDFEAVVGDFGLAKLMDYKDTHVTTAVRGTIGHIAPEYLSTGKSSEKTDVFGYGIMLLELITGQRAFDLARLANDDDVMLLDWVKGLLKEKRLEMLVDPDLQSNYIDVEVESLIQVALLCTQGSPTERPKMAEVVRMLEGDGLAERWEEWQKIEVVRQEVELGPHRNSEWIVDSTDNLHAVELSGPR.

The N-terminal stretch at 1-25 (MAAPRWAVWAVLLLRLLVPAARVLA) is a signal peptide. Residues 26-237 (NMEGDALHSL…QSPGSSSSTG (212 aa)) are Extracellular-facing. LRR repeat units follow at residues 91-115 (LKNLQYLELYSNNISGTIPSELGNL), 117-139 (NLVSLDLYLNNFTGPIPDSLGNL), 140-163 (LKLRFLRLNNNSLSGSIPKSLTAI), and 164-188 (TALQVLDLSNNNLSGEVPSTGSFSL). 5 N-linked (GlcNAc...) asparagine glycosylation sites follow: asparagine 103, asparagine 114, asparagine 127, asparagine 149, and asparagine 175. Residues 205–236 (TTKPCPGAPPFSPPPPYNPPTPVQSPGSSSST) are disordered. Residues 210–227 (PGAPPFSPPPPYNPPTPV) show a composition bias toward pro residues. A helical membrane pass occupies residues 238 to 258 (AIAGGVAAGAALLFAIPAIGF). Over 259–624 (AWYRRRKPQE…LHAVELSGPR (366 aa)) the chain is Cytoplasmic. Positions 301–588 (FSNKNILGRG…GLAERWEEWQ (288 aa)) constitute a Protein kinase domain. Residues 307–315 (LGRGGFGKV) and lysine 329 each bind ATP. The active-site Proton acceptor is the aspartate 428.

It belongs to the protein kinase superfamily. Ser/Thr protein kinase family. In terms of assembly, forms homodimers. Interacts with BRI1. Interacts with REM4.1.

The protein localises to the cell membrane. It catalyses the reaction L-seryl-[protein] + ATP = O-phospho-L-seryl-[protein] + ADP + H(+). It carries out the reaction L-threonyl-[protein] + ATP = O-phospho-L-threonyl-[protein] + ADP + H(+). Functionally, LRR receptor kinase involved in defense response. Does not seem to be required specifically for XA21-mediated immunity or basal resistance to Xanthomonas oryzae pv. oryzae (Xoo), or immunity to Magnaporthe oryzae. Involved in brassinosteroid (BR) signaling pathway. Acts as a coreceptor of BRI1. Forms at the plasma membrane a receptor complex with BRI1 which is activated in response to brassinolide. Phosphorylates BRI1. Required for normal plant growth and leaf development. Possesses kinase activity in vitro. The sequence is that of LRR receptor kinase BAK1 from Oryza sativa subsp. indica (Rice).